The sequence spans 117 residues: Transcription elongation factor A protein-like 8 (117 aa).

2 stretches are compositionally biased toward basic and acidic residues: residues 1–24 (MQKS…DRPL) and 61–74 (YKED…DPEE). The disordered stretch occupies residues 1 to 74 (MQKSCGENER…SPVRHLDPEE (74 aa)). The stretch at 73–100 (EEMIRGADELERLREEIRRVRNKFVMMH) forms a coiled coil.

Belongs to the TFS-II family. TFA subfamily.

The protein localises to the nucleus. In terms of biological role, may be involved in transcriptional regulation. This chain is Transcription elongation factor A protein-like 8 (TCEAL8), found in Bos taurus (Bovine).